The following is a 533-amino-acid chain: Probable lipid II flippase MurJ (533 aa).

A run of 14 helical transmembrane segments spans residues 11–31 (LANIAGIVAIATLISKVFGLL), 39–61 (AFGVGTVVTAYAYAYVIPGFLFI), 96–116 (LVSGVLLGVTIILVLGAGIFI), 135–155 (LQIMAPMALLSGLIGIGFGTL), 166–186 (ISPLLSSITVILGLGVAVWQL), 196–216 (WLLGSLLLAGGTTAGAVLQWL), 253–273 (LSSGMLYINFATNLFFASFIP), 284–304 (FVALTPLGIISNMILVPFLPV), 330–350 (LTMFPLTAILVGLAIPIVQVI), 360–380 (AAAEVAPVLAAYGLGMFFYLG), 400–420 (VSLFNIFLNGLLDYLFYKPFG), 422–442 (VGIVMATVGVNLFSMTIFIWM), 452–472 (LGGWAMDLGKLVGVTAIASVA), and 493–513 (ILEVLTMSSIILVVFTVGVAL).

Belongs to the MurJ/MviN family.

The protein localises to the cell inner membrane. It participates in cell wall biogenesis; peptidoglycan biosynthesis. Functionally, involved in peptidoglycan biosynthesis. Transports lipid-linked peptidoglycan precursors from the inner to the outer leaflet of the cytoplasmic membrane. This Synechocystis sp. (strain ATCC 27184 / PCC 6803 / Kazusa) protein is Probable lipid II flippase MurJ.